The following is a 128-amino-acid chain: Large ribosomal subunit protein eL22 (128 aa).

Thr62 carries the post-translational modification Phosphothreonine. The residue at position 66 (Ser66) is a Phosphoserine. The residue at position 69 (Lys69) is an N6-succinyllysine.

This sequence belongs to the eukaryotic ribosomal protein eL22 family. As to quaternary structure, component of the large ribosomal subunit.

The protein resides in the cytoplasm. Its function is as follows. Component of the large ribosomal subunit. The ribosome is a large ribonucleoprotein complex responsible for the synthesis of proteins in the cell. This is Large ribosomal subunit protein eL22 (Rpl22) from Rattus norvegicus (Rat).